The chain runs to 205 residues: Ephrin-A1 (205 aa).

The first 17 residues, 1-17, serve as a signal peptide directing secretion; that stretch reads MEFLWAPLLGLCCSLAA. One can recognise an Ephrin RBD domain in the interval 18–151; the sequence is ADRHIVFWNS…KLKVTVNGKI (134 aa). N26 is a glycosylation site (N-linked (GlcNAc...) asparagine). 2 disulfides stabilise this stretch: C51-C92 and C80-C140. A lipid anchor (GPI-anchor amidated serine) is attached at S182. Positions 183 to 205 are cleaved as a propeptide — removed in mature form; that stretch reads AAPRLFPLVWAVLLLPLLLLQTQ.

The protein belongs to the ephrin family. As to quaternary structure, monomer. Homodimer. Forms heterodimers with EPHA2. Binds to the receptor tyrosine kinases EPHA2, EPHA3, EPHA4, EPHA5, EPHA6 and EPHA7. Also binds with low affinity to EPHA1. Post-translationally, undergoes proteolysis by a metalloprotease to give rise to a soluble monomeric form. In terms of processing, N-Glycosylation is required for binding to EPHA2 receptor and inducing its internalization.

The protein resides in the cell membrane. The protein localises to the secreted. Functionally, cell surface GPI-bound ligand for Eph receptors, a family of receptor tyrosine kinases which are crucial for migration, repulsion and adhesion during neuronal, vascular and epithelial development. Binds promiscuously Eph receptors residing on adjacent cells, leading to contact-dependent bidirectional signaling into neighboring cells. Plays an important role in angiogenesis and tumor neovascularization. The recruitment of VAV2, VAV3 and PI3-kinase p85 subunit by phosphorylated EPHA2 is critical for EFNA1-induced RAC1 GTPase activation and vascular endothelial cell migration and assembly. Exerts anti-oncogenic effects in tumor cells through activation and down-regulation of EPHA2. Activates EPHA2 by inducing tyrosine phosphorylation which leads to its internalization and degradation. Acts as a negative regulator in the tumorigenesis of gliomas by down-regulating EPHA2 and FAK. Can evoke collapse of embryonic neuronal growth cone and regulates dendritic spine morphogenesis. This is Ephrin-A1 (Efna1) from Rattus norvegicus (Rat).